A 138-amino-acid chain; its full sequence is Basic phospholipase A2 ammodytoxin A (138 aa).

The N-terminal stretch at 1-16 is a signal peptide; it reads MRTLWIVAVCLIGVEG. 7 disulfides stabilise this stretch: Cys-42/Cys-131, Cys-44/Cys-60, Cys-59/Cys-111, Cys-65/Cys-138, Cys-66/Cys-104, Cys-73/Cys-97, and Cys-91/Cys-102. The Ca(2+) site is built by Tyr-43, Gly-45, and Gly-47. His-63 is an active-site residue. Asp-64 serves as a coordination point for Ca(2+). Residue Asp-105 is part of the active site.

The protein belongs to the phospholipase A2 family. Group II subfamily. D49 sub-subfamily. Monomer. Binds to calmodulin, coagulation factor X (F10), M-type PLA2 receptor (R-180). May also bind to 14-3-3 proteins gamma (YWHAG) and epsilon (YWHAE), and R25, a mitochondrial membrane protein. The cofactor is Ca(2+). Expressed by the venom gland.

The protein localises to the secreted. The protein resides in the host cytoplasm. Its subcellular location is the host cytosol. The enzyme catalyses a 1,2-diacyl-sn-glycero-3-phosphocholine + H2O = a 1-acyl-sn-glycero-3-phosphocholine + a fatty acid + H(+). Functionally, snake venom phospholipase A2 (PLA2) that acts as a presynaptic neurotoxin, an inhibitor of blood coagulation, and has been found to bind with high affinity to intracellular proteins. The response of indirectly stimulated neuromuscular preparations to ammodytoxin (Atx) is triphasic. The first phase, the transient inhibition of the acetylcholine (ACh) release, starts soon after the addition of Atx and lasts for several minutes. This phase is probably independent of Atx enzymatic activity. The effect may be due to the specific binding of the toxin to presynaptic receptors. These receptors, called N-type receptors, are still unidentified. It is noteworthy that a neuronal isoform of the M-type PLA2 receptor (R180) has been identified as a high-affinity receptor for Atx in neuronal plasma membranes. It was demonstrated however that this receptor is not essential for expression of neurotoxicity by Atx. The second phase corresponds to an augmentation of neurotransmitter release. A peak is reached 10-20 minutes after exposure of the preparation to Atx and is followed by a gradual reduction. In this phase, the enzymatic activity of Atx of the mammalian is not significant. It is speculated that the increased release of neurotransmitter in this phase is induced by the interference of Atx with voltage-gated potassium channels. Measurements of ionic currents showed however that voltage-gated potassium channels are not affected by Atx. The third phase of the response of neuromuscular preparations to Atx, which corresponds to a complete and irreversible paralysis, is clearly dependent on the hydrolytic activity of the toxin. In addition to its presynaptic neurotoxicity, Atx shows an anticoagulant activity by binding with high affinity to activated coagulation factor X (F10) thus inhibiting the formation of the prothrombinase complex (FX/FV) and its activity (IC(50) is 20 nM). Surprisingly, Atx was discovered to bind intracellular proteins such as calmodulin (CaM) (IC(50) is 6 nM), 14-3-3 proteins gamma (YWHAG) and epsilon (YWHAE) (by similarity with AtxC), as well as R25 (by similarity with AtxC), a mitochondrial integral membrane protein found in cerebral cortex. These findings raised a doubt about the dogma of the exclusively extracellular action of PLA2s, defended by the potential instability of these molecules in the reducing environment of the eukaryotic cytosol coupled with their possible inability to act as enzymes in this cellular compartment, due to too low concentration of calcium ions. This hypothesis was challenged efficiently by demonstrating the internalization of AtxA into a culture cells, but still remains to be directly demonstrated in vivo. PLA2 catalyzes the calcium-dependent hydrolysis of the 2-acyl groups in 3-sn-phosphoglycerides. In Vipera ammodytes ammodytes (Western sand viper), this protein is Basic phospholipase A2 ammodytoxin A.